A 123-amino-acid chain; its full sequence is Small ribosomal subunit protein uS12 (123 aa).

Aspartate 89 bears the 3-methylthioaspartic acid mark.

Belongs to the universal ribosomal protein uS12 family. Part of the 30S ribosomal subunit. Contacts proteins S8 and S17. May interact with IF1 in the 30S initiation complex.

With S4 and S5 plays an important role in translational accuracy. In terms of biological role, interacts with and stabilizes bases of the 16S rRNA that are involved in tRNA selection in the A site and with the mRNA backbone. Located at the interface of the 30S and 50S subunits, it traverses the body of the 30S subunit contacting proteins on the other side and probably holding the rRNA structure together. The combined cluster of proteins S8, S12 and S17 appears to hold together the shoulder and platform of the 30S subunit. This chain is Small ribosomal subunit protein uS12, found in Geobacter metallireducens (strain ATCC 53774 / DSM 7210 / GS-15).